The primary structure comprises 163 residues: CASP-like protein 1C2 (163 aa).

Topologically, residues 1–7 (MAKLHRL) are cytoplasmic. Residues 8-28 (ISAVLRLAAAGAAAAAAVIMV) traverse the membrane as a helical segment. Topologically, residues 29–50 (TSHETTSLFGIEMEAKYSYTPS) are extracellular. A helical membrane pass occupies residues 51–71 (FVFFVVAFAVTFAYSLLAAVL). At 72–80 (VRPGTTASR) the chain is on the cytoplasmic side. A helical membrane pass occupies residues 81–101 (LVLLSDVTVGMLLTGAVAATG). The Extracellular segment spans residues 102–129 (AISQVGKSGNEHAGWLPICAQVQAYCGH). A helical membrane pass occupies residues 130–150 (VMGALIAGFVSLLLYFLIIMY). Residues 151–163 (SLHAVAEPLCSCH) lie on the Cytoplasmic side of the membrane.

The protein belongs to the Casparian strip membrane proteins (CASP) family. As to quaternary structure, homodimer and heterodimers.

It localises to the cell membrane. This chain is CASP-like protein 1C2, found in Zea mays (Maize).